Reading from the N-terminus, the 449-residue chain is Glucose-6-phosphate isomerase (449 aa).

Catalysis depends on glutamate 291, which acts as the Proton donor. Catalysis depends on residues histidine 312 and lysine 426.

It belongs to the GPI family.

The protein localises to the cytoplasm. It carries out the reaction alpha-D-glucose 6-phosphate = beta-D-fructose 6-phosphate. The protein operates within carbohydrate biosynthesis; gluconeogenesis. It participates in carbohydrate degradation; glycolysis; D-glyceraldehyde 3-phosphate and glycerone phosphate from D-glucose: step 2/4. Its function is as follows. Catalyzes the reversible isomerization of glucose-6-phosphate to fructose-6-phosphate. The protein is Glucose-6-phosphate isomerase of Streptococcus pneumoniae (strain ATCC BAA-255 / R6).